Here is a 480-residue protein sequence, read N- to C-terminus: Glutamyl-tRNA(Gln) amidotransferase subunit A (480 aa).

Catalysis depends on charge relay system residues Lys-70 and Ser-145. Residue Ser-169 is the Acyl-ester intermediate of the active site.

Belongs to the amidase family. GatA subfamily. In terms of assembly, heterotrimer of A, B and C subunits.

It catalyses the reaction L-glutamyl-tRNA(Gln) + L-glutamine + ATP + H2O = L-glutaminyl-tRNA(Gln) + L-glutamate + ADP + phosphate + H(+). Allows the formation of correctly charged Gln-tRNA(Gln) through the transamidation of misacylated Glu-tRNA(Gln) in organisms which lack glutaminyl-tRNA synthetase. The reaction takes place in the presence of glutamine and ATP through an activated gamma-phospho-Glu-tRNA(Gln). This Lactobacillus delbrueckii subsp. bulgaricus (strain ATCC 11842 / DSM 20081 / BCRC 10696 / JCM 1002 / NBRC 13953 / NCIMB 11778 / NCTC 12712 / WDCM 00102 / Lb 14) protein is Glutamyl-tRNA(Gln) amidotransferase subunit A.